Reading from the N-terminus, the 98-residue chain is Co-chaperonin GroES (98 aa).

This sequence belongs to the GroES chaperonin family. Heptamer of 7 subunits arranged in a ring. Interacts with the chaperonin GroEL.

It is found in the cytoplasm. Together with the chaperonin GroEL, plays an essential role in assisting protein folding. The GroEL-GroES system forms a nano-cage that allows encapsulation of the non-native substrate proteins and provides a physical environment optimized to promote and accelerate protein folding. GroES binds to the apical surface of the GroEL ring, thereby capping the opening of the GroEL channel. The polypeptide is Co-chaperonin GroES (Kineococcus radiotolerans (strain ATCC BAA-149 / DSM 14245 / SRS30216)).